The sequence spans 612 residues: Autophagy-related protein 28 (612 aa).

Residues 44-72 (NHMEEQSPKFESSFPRRTSEGPVDDVGKS) form a disordered region. The stretch at 214–296 (YQAKAQDKQA…QRTLKNECFQ (83 aa)) forms a coiled coil.

The protein belongs to the ATG28 family. Interacts with ATG35.

It is found in the cytoplasm. The protein localises to the vacuole membrane. It localises to the cytoplasmic vesicle membrane. In terms of biological role, required for the autophagic degradation of peroxisomes called pexophagy, but not essential for general autophagy. Involved in resistance to elevated pH. The chain is Autophagy-related protein 28 (ATG28) from Komagataella phaffii (strain GS115 / ATCC 20864) (Yeast).